The chain runs to 567 residues: DNA ligase B (567 aa).

Lys-132 serves as the catalytic N6-AMP-lysine intermediate.

Belongs to the NAD-dependent DNA ligase family. LigB subfamily.

The catalysed reaction is NAD(+) + (deoxyribonucleotide)n-3'-hydroxyl + 5'-phospho-(deoxyribonucleotide)m = (deoxyribonucleotide)n+m + AMP + beta-nicotinamide D-nucleotide.. Catalyzes the formation of phosphodiester linkages between 5'-phosphoryl and 3'-hydroxyl groups in double-stranded DNA using NAD as a coenzyme and as the energy source for the reaction. This chain is DNA ligase B, found in Yersinia pseudotuberculosis serotype O:1b (strain IP 31758).